We begin with the raw amino-acid sequence, 118 residues long: V-type proton ATPase subunit G 1 (118 aa).

The residue at position 2 (alanine 2) is an N-acetylalanine.

This sequence belongs to the V-ATPase G subunit family. As to quaternary structure, V-ATPase is a heteromultimeric enzyme made up of two complexes: the ATP-hydrolytic V1 complex and the proton translocation V0 complex. The V1 complex consists of three catalytic AB heterodimers that form a heterohexamer, three peripheral stalks each consisting of EG heterodimers, one central rotor including subunits D and F, and the regulatory subunits C and H. The proton translocation complex V0 consists of the proton transport subunit a, a ring of proteolipid subunits c9c'', rotary subunit d, subunits e and f, and the accessory subunits ATP6AP1/Ac45 and ATP6AP2/PRR. Kidney; localizes to early distal nephron, encompassing thick ascending limbs and distal convoluted tubules (at protein level). Ubiquitous.

The protein resides in the apical cell membrane. Subunit of the V1 complex of vacuolar(H+)-ATPase (V-ATPase), a multisubunit enzyme composed of a peripheral complex (V1) that hydrolyzes ATP and a membrane integral complex (V0) that translocates protons. V-ATPase is responsible for acidifying and maintaining the pH of intracellular compartments and in some cell types, is targeted to the plasma membrane, where it is responsible for acidifying the extracellular environment. In aerobic conditions, involved in intracellular iron homeostasis, thus triggering the activity of Fe(2+) prolyl hydroxylase (PHD) enzymes, and leading to HIF1A hydroxylation and subsequent proteasomal degradation. This chain is V-type proton ATPase subunit G 1 (ATP6V1G1), found in Homo sapiens (Human).